The sequence spans 332 residues: Large ribosomal subunit protein mL44 (332 aa).

The N-terminal 30 residues, 1–30 (MASGLVRLLQQGHRCLLAPVAPKLVPPVRG), are a transit peptide targeting the mitochondrion. The RNase III domain occupies 86–228 (DLLKTAFVNS…LITQMTGKEL (143 aa)). The DRBM domain occupies 236–306 (NPMGLLVEEL…ARVALRKLYG (71 aa)).

It belongs to the ribonuclease III family. Mitochondrion-specific ribosomal protein mL44 subfamily. Component of the mitochondrial large ribosomal subunit (mt-LSU). Mature mammalian 55S mitochondrial ribosomes consist of a small (28S) and a large (39S) subunit. The 28S small subunit contains a 12S ribosomal RNA (12S mt-rRNA) and 30 different proteins. The 39S large subunit contains a 16S rRNA (16S mt-rRNA), a copy of mitochondrial valine transfer RNA (mt-tRNA(Val)), which plays an integral structural role, and 52 different proteins.

It is found in the mitochondrion. Functionally, component of the 39S subunit of mitochondrial ribosome. May have a function in the assembly/stability of nascent mitochondrial polypeptides exiting the ribosome. This Homo sapiens (Human) protein is Large ribosomal subunit protein mL44 (MRPL44).